The chain runs to 284 residues: UPF0276 protein Ping_0944 (284 aa).

It belongs to the UPF0276 family.

In Psychromonas ingrahamii (strain DSM 17664 / CCUG 51855 / 37), this protein is UPF0276 protein Ping_0944.